We begin with the raw amino-acid sequence, 443 residues long: F-box/LRR-repeat protein At2g42720 (443 aa).

The F-box domain occupies 1–47 (MDRISSLPDEILEHILSFLSTKEAALTSSLSTRWKNVFVFVPSLHLD). LRR repeat units follow at residues 139 to 167 (KLRL…CLDT), 169 to 194 (DFDG…VLED), 201 to 236 (CGSV…ELSC), 271 to 296 (SSHL…HLTS), 323 to 348 (DKKQ…VFKG), and 363 to 389 (CSGI…SYQG).

In Arabidopsis thaliana (Mouse-ear cress), this protein is F-box/LRR-repeat protein At2g42720.